Consider the following 491-residue polypeptide: Glutamyl-tRNA(Gln) amidotransferase subunit A (491 aa).

Residues Lys76 and Ser154 each act as charge relay system in the active site. Ser178 serves as the catalytic Acyl-ester intermediate.

This sequence belongs to the amidase family. GatA subfamily. Heterotrimer of A, B and C subunits.

The enzyme catalyses L-glutamyl-tRNA(Gln) + L-glutamine + ATP + H2O = L-glutaminyl-tRNA(Gln) + L-glutamate + ADP + phosphate + H(+). Allows the formation of correctly charged Gln-tRNA(Gln) through the transamidation of misacylated Glu-tRNA(Gln) in organisms which lack glutaminyl-tRNA synthetase. The reaction takes place in the presence of glutamine and ATP through an activated gamma-phospho-Glu-tRNA(Gln). The sequence is that of Glutamyl-tRNA(Gln) amidotransferase subunit A from Cereibacter sphaeroides (strain ATCC 17025 / ATH 2.4.3) (Rhodobacter sphaeroides).